We begin with the raw amino-acid sequence, 133 residues long: MANHDPISDMLTRIRNASEKRHEKTKVPASRMSLSIAKVLQSEGFIAEINEEGEGFRKQLILGLKYTGKHRSPIIRSMQRVSKPGLRIYKNTRGLPKVLGGLGIAIISTSNGVMSDRDARKQGVGGEVLCYVC.

The tract at residues 1-28 (MANHDPISDMLTRIRNASEKRHEKTKVP) is disordered. The span at 16–26 (NASEKRHEKTK) shows a compositional bias: basic and acidic residues.

Belongs to the universal ribosomal protein uS8 family. Part of the 30S ribosomal subunit. Contacts proteins S5 and S12.

In terms of biological role, one of the primary rRNA binding proteins, it binds directly to 16S rRNA central domain where it helps coordinate assembly of the platform of the 30S subunit. The protein is Small ribosomal subunit protein uS8 of Prochlorococcus marinus (strain NATL2A).